We begin with the raw amino-acid sequence, 300 residues long: Secreted mono- and diacylglycerol lipase LIP4 (300 aa).

Positions 1–16 (MRFLAFLLCLVPLALC) are cleaved as a signal peptide. An intrachain disulfide couples cysteine 54 to cysteine 293. Serine 167 acts as the Nucleophile in catalysis. Aspartate 224 is an active-site residue.

The protein belongs to the AB hydrolase superfamily. Lipase family. Class 3 subfamily.

The protein resides in the secreted. The catalysed reaction is a monoacylglycerol + H2O = glycerol + a fatty acid + H(+). It catalyses the reaction a diacylglycerol + H2O = a monoacylglycerol + a fatty acid + H(+). Its function is as follows. Secreted lipase involved in Dandruff and seborrheic dermatitis (D/SD) probably via lipase-mediated breakdown of sebaceous lipids and release of irritating free fatty acids. Shows activity against monoglyceride and diglyceride substrates. Due to an absence of fatty acid synthase genes in Malassezia species, secretory lipases are essential for the yeast to generate free fatty acids from degradation of sebum and assimilate them as lipid sources for growth. Plays an essential role at the pathogen-host interface during disease progression. This chain is Secreted mono- and diacylglycerol lipase LIP4, found in Malassezia restricta (Seborrheic dermatitis infection agent).